The following is a 212-amino-acid chain: Thymidylate kinase (212 aa).

10–17 (GPEGAGKT) provides a ligand contact to ATP.

This sequence belongs to the thymidylate kinase family.

The catalysed reaction is dTMP + ATP = dTDP + ADP. Functionally, phosphorylation of dTMP to form dTDP in both de novo and salvage pathways of dTTP synthesis. The polypeptide is Thymidylate kinase (Bacillus licheniformis (strain ATCC 14580 / DSM 13 / JCM 2505 / CCUG 7422 / NBRC 12200 / NCIMB 9375 / NCTC 10341 / NRRL NRS-1264 / Gibson 46)).